The primary structure comprises 1116 residues: Protein translocase subunit SecA (1116 aa).

Residues Gln176, 194-198, and Asp693 contribute to the ATP site; that span reads GEGKT.

It belongs to the SecA family. As to quaternary structure, monomer and homodimer. Part of the essential Sec protein translocation apparatus which comprises SecA, SecYEG and auxiliary proteins SecDF. Other proteins may also be involved.

It is found in the cell inner membrane. Its subcellular location is the cytoplasm. It catalyses the reaction ATP + H2O + cellular proteinSide 1 = ADP + phosphate + cellular proteinSide 2.. Part of the Sec protein translocase complex. Interacts with the SecYEG preprotein conducting channel. Has a central role in coupling the hydrolysis of ATP to the transfer of proteins into and across the cell membrane, serving as an ATP-driven molecular motor driving the stepwise translocation of polypeptide chains across the membrane. This Amoebophilus asiaticus (strain 5a2) protein is Protein translocase subunit SecA.